Reading from the N-terminus, the 360-residue chain is Uroporphyrinogen decarboxylase (360 aa).

Substrate-binding positions include 27-31 (RQSGR), F46, D77, Y154, T209, and H327.

The protein belongs to the uroporphyrinogen decarboxylase family. Homodimer.

The protein localises to the cytoplasm. It catalyses the reaction uroporphyrinogen III + 4 H(+) = coproporphyrinogen III + 4 CO2. The protein operates within porphyrin-containing compound metabolism; protoporphyrin-IX biosynthesis; coproporphyrinogen-III from 5-aminolevulinate: step 4/4. Catalyzes the decarboxylation of four acetate groups of uroporphyrinogen-III to yield coproporphyrinogen-III. The polypeptide is Uroporphyrinogen decarboxylase (Wigglesworthia glossinidia brevipalpis).